We begin with the raw amino-acid sequence, 106 residues long: Nucleoid-associated protein XCV1128 (106 aa).

The interval 81 to 106 is disordered; it reads IDAESKDRMGSATAGMQLPPGMKLPF.

Belongs to the YbaB/EbfC family. As to quaternary structure, homodimer.

It localises to the cytoplasm. Its subcellular location is the nucleoid. Functionally, binds to DNA and alters its conformation. May be involved in regulation of gene expression, nucleoid organization and DNA protection. In Xanthomonas euvesicatoria pv. vesicatoria (strain 85-10) (Xanthomonas campestris pv. vesicatoria), this protein is Nucleoid-associated protein XCV1128.